The chain runs to 267 residues: U6 snRNA phosphodiesterase 1 (267 aa).

The segment covering 1-13 (MSSAPLVGYSSSG) has biased composition (polar residues). The segment at 1 to 74 (MSSAPLVGYS…DSAKHGGRIR (74 aa)) is disordered. H122 (proton acceptor) is an active-site residue. Residue 122–124 (HVS) participates in AMP binding. UMP contacts are provided by residues Q166, Y204, and 208–212 (SFHIS). AMP-binding positions include Y204 and 206-212 (DPSFHIS). H210 functions as the Proton donor in the catalytic mechanism.

Belongs to the 2H phosphoesterase superfamily. USB1 family. In terms of assembly, interacts with PLRG1, CDC5L and PRPF19.

Its subcellular location is the nucleus. It catalyses the reaction a 3'-end uridylyl-uridine-RNA = a 3'-end 2',3'-cyclophospho-uridine-RNA + uridine. The catalysed reaction is a 3'-end uridylyl-adenosine-RNA = a 3'-end 2',3'-cyclophospho-uridine-RNA + adenosine. 3'-5' RNA exonuclease that trims the 3' end of oligo(U) and oligo(A) tracts of the pre-U6 small nuclear RNA (snRNA) molecule, leading to the formation of a mature U6 snRNA 3' end-terminated with a 2',3'-cyclic phosphate. Participates in the U6 snRNA 3' end processing that prevents U6 snRNA degradation. In addition also removes uridines from the 3' end of U6atac snRNA and possibly the vault RNA VTRNA1-1. The sequence is that of U6 snRNA phosphodiesterase 1 from Mus musculus (Mouse).